The sequence spans 327 residues: ABC transporter periplasmic-binding protein YphF (327 aa).

Positions 1-26 (MPTKMRTTRNLLLMATLLGSALFARA) are cleaved as a signal peptide.

The protein belongs to the bacterial solute-binding protein 2 family.

The protein localises to the periplasm. Functionally, probably part of the binding-protein-dependent transport system YphDEF. This Escherichia coli (strain K12) protein is ABC transporter periplasmic-binding protein YphF (yphF).